Here is a 150-residue protein sequence, read N- to C-terminus: Large ribosomal subunit protein bL9 (150 aa).

Belongs to the bacterial ribosomal protein bL9 family.

Functionally, binds to the 23S rRNA. In Leuconostoc mesenteroides subsp. mesenteroides (strain ATCC 8293 / DSM 20343 / BCRC 11652 / CCM 1803 / JCM 6124 / NCDO 523 / NBRC 100496 / NCIMB 8023 / NCTC 12954 / NRRL B-1118 / 37Y), this protein is Large ribosomal subunit protein bL9.